The primary structure comprises 257 residues: Zinc transporter ZupT (257 aa).

The next 3 helical transmembrane spans lie at 5–25 (LILTILAGAATFIGAFLGVLG), 32–52 (LLAFSLGFAAGIMLLISLMEM), and 61–81 (GMSPVLGYGMFIFGLLGYFGL). Fe(2+) contacts are provided by N120 and E123. 2 residues coordinate Zn(2+): E123 and H148. 4 consecutive transmembrane segments (helical) span residues 137-157 (LGFGIALAVALHNIPEGLAVA), 171-191 (ILWAGISGLAEILGGVLAWLI), 195-215 (MISPVVMAAIMAAVAGIMVAL), and 236-256 (GVLCGMSVMGFSLVLLQTAGI). The Fe(2+) site is built by N149, E152, and E181. E152 is a binding site for Zn(2+).

It belongs to the ZIP transporter (TC 2.A.5) family. ZupT subfamily.

Its subcellular location is the cell inner membrane. It catalyses the reaction Zn(2+)(in) = Zn(2+)(out). Its function is as follows. Mediates zinc uptake. May also transport other divalent cations. This is Zinc transporter ZupT from Escherichia coli O45:K1 (strain S88 / ExPEC).